The primary structure comprises 120 residues: Holo-[acyl-carrier-protein] synthase (120 aa).

Positions 8 and 58 each coordinate Mg(2+).

It belongs to the P-Pant transferase superfamily. AcpS family. Mg(2+) is required as a cofactor.

It is found in the cytoplasm. The enzyme catalyses apo-[ACP] + CoA = holo-[ACP] + adenosine 3',5'-bisphosphate + H(+). Its function is as follows. Transfers the 4'-phosphopantetheine moiety from coenzyme A to a Ser of acyl-carrier-protein. The protein is Holo-[acyl-carrier-protein] synthase of Streptococcus pneumoniae (strain Hungary19A-6).